A 103-amino-acid chain; its full sequence is Large ribosomal subunit protein bL21 (103 aa).

Belongs to the bacterial ribosomal protein bL21 family. As to quaternary structure, part of the 50S ribosomal subunit. Contacts protein L20.

Functionally, this protein binds to 23S rRNA in the presence of protein L20. The protein is Large ribosomal subunit protein bL21 of Acinetobacter baumannii (strain AB307-0294).